Reading from the N-terminus, the 195-residue chain is Holliday junction branch migration complex subunit RuvA (195 aa).

The tract at residues 1 to 64 is domain I; it reads MIGRIAGLLL…EDAHLLFGFM (64 aa). Positions 65-140 are domain II; sequence TEPERVLFRQ…KISPAITLPE (76 aa). Residues 140–144 form a flexible linker region; the sequence is ETGTA. A domain III region spans residues 145–195; it reads MASSTDKDILNALSALGYNDREANWAVGQLSEGVTVSDGIMQSLRLLSKAK.

The protein belongs to the RuvA family. In terms of assembly, homotetramer. Forms an RuvA(8)-RuvB(12)-Holliday junction (HJ) complex. HJ DNA is sandwiched between 2 RuvA tetramers; dsDNA enters through RuvA and exits via RuvB. An RuvB hexamer assembles on each DNA strand where it exits the tetramer. Each RuvB hexamer is contacted by two RuvA subunits (via domain III) on 2 adjacent RuvB subunits; this complex drives branch migration. In the full resolvosome a probable DNA-RuvA(4)-RuvB(12)-RuvC(2) complex forms which resolves the HJ.

The protein resides in the cytoplasm. Its function is as follows. The RuvA-RuvB-RuvC complex processes Holliday junction (HJ) DNA during genetic recombination and DNA repair, while the RuvA-RuvB complex plays an important role in the rescue of blocked DNA replication forks via replication fork reversal (RFR). RuvA specifically binds to HJ cruciform DNA, conferring on it an open structure. The RuvB hexamer acts as an ATP-dependent pump, pulling dsDNA into and through the RuvAB complex. HJ branch migration allows RuvC to scan DNA until it finds its consensus sequence, where it cleaves and resolves the cruciform DNA. This chain is Holliday junction branch migration complex subunit RuvA, found in Nitrosomonas europaea (strain ATCC 19718 / CIP 103999 / KCTC 2705 / NBRC 14298).